Consider the following 505-residue polypeptide: Glutamate--tRNA ligase (505 aa).

The 'HIGH' region motif lies at 12 to 22; the sequence is PSPTGDPHVGT. Positions 253 to 257 match the 'KMSKS' region motif; it reads KLSKR. Lys-256 is an ATP binding site.

The protein belongs to the class-I aminoacyl-tRNA synthetase family. Glutamate--tRNA ligase type 1 subfamily. Monomer.

It is found in the cytoplasm. It carries out the reaction tRNA(Glu) + L-glutamate + ATP = L-glutamyl-tRNA(Glu) + AMP + diphosphate. In terms of biological role, catalyzes the attachment of glutamate to tRNA(Glu) in a two-step reaction: glutamate is first activated by ATP to form Glu-AMP and then transferred to the acceptor end of tRNA(Glu). The sequence is that of Glutamate--tRNA ligase from Chlamydia pneumoniae (Chlamydophila pneumoniae).